Here is a 204-residue protein sequence, read N- to C-terminus: Ribosomal RNA large subunit methyltransferase E (204 aa).

5 residues coordinate S-adenosyl-L-methionine: Gly-49, Trp-51, Asp-69, Asn-87, and Asp-111. Lys-151 (proton acceptor) is an active-site residue.

This sequence belongs to the class I-like SAM-binding methyltransferase superfamily. RNA methyltransferase RlmE family.

It localises to the cytoplasm. The catalysed reaction is uridine(2552) in 23S rRNA + S-adenosyl-L-methionine = 2'-O-methyluridine(2552) in 23S rRNA + S-adenosyl-L-homocysteine + H(+). Functionally, specifically methylates the uridine in position 2552 of 23S rRNA at the 2'-O position of the ribose in the fully assembled 50S ribosomal subunit. This chain is Ribosomal RNA large subunit methyltransferase E, found in Nitratidesulfovibrio vulgaris (strain ATCC 29579 / DSM 644 / CCUG 34227 / NCIMB 8303 / VKM B-1760 / Hildenborough) (Desulfovibrio vulgaris).